We begin with the raw amino-acid sequence, 429 residues long: N5-carboxyaminoimidazole ribonucleotide synthase (429 aa).

Residues Lys-117, Lys-157, 194-197 (EERV), Glu-202, and 280-281 (NE) each bind ATP. Residues 121–310 (RQRLAAAGVA…QFEQHLRAVL (190 aa)) enclose the ATP-grasp domain. The disordered stretch occupies residues 406-429 (RASDDAVGVPPACGGRSDEEERRL).

Belongs to the PurK/PurT family. Homodimer.

The catalysed reaction is 5-amino-1-(5-phospho-beta-D-ribosyl)imidazole + hydrogencarbonate + ATP = 5-carboxyamino-1-(5-phospho-D-ribosyl)imidazole + ADP + phosphate + 2 H(+). It participates in purine metabolism; IMP biosynthesis via de novo pathway; 5-amino-1-(5-phospho-D-ribosyl)imidazole-4-carboxylate from 5-amino-1-(5-phospho-D-ribosyl)imidazole (N5-CAIR route): step 1/2. In terms of biological role, catalyzes the ATP-dependent conversion of 5-aminoimidazole ribonucleotide (AIR) and HCO(3)(-) to N5-carboxyaminoimidazole ribonucleotide (N5-CAIR). This chain is N5-carboxyaminoimidazole ribonucleotide synthase, found in Mycobacterium bovis (strain ATCC BAA-935 / AF2122/97).